A 382-amino-acid chain; its full sequence is Mannitol-1-phosphate 5-dehydrogenase (382 aa).

3-14 contacts NAD(+); it reads ALHFGAGNIGRG.

The protein belongs to the mannitol dehydrogenase family.

The catalysed reaction is D-mannitol 1-phosphate + NAD(+) = beta-D-fructose 6-phosphate + NADH + H(+). The polypeptide is Mannitol-1-phosphate 5-dehydrogenase (Pectobacterium atrosepticum (strain SCRI 1043 / ATCC BAA-672) (Erwinia carotovora subsp. atroseptica)).